Here is a 264-residue protein sequence, read N- to C-terminus: Probable mobile endonuclease B (264 aa).

Residues 25–50 form the HNH domain; sequence TYYTETHHIIPRCMGGTDDKTNLVLL.

It to phage T4 mobC and mobD.

In Escherichia coli (Bacteriophage T4), this protein is Probable mobile endonuclease B (mobB).